The chain runs to 412 residues: Zinc finger protein 821 (412 aa).

The segment at 26–83 (RQAMMKTDFPGDLGSQRQAIQQLRDQDSSSSDSEGDEEETTQDEVSSHTSEEDGGVVK) is disordered. A compositionally biased stretch (acidic residues) spans 58-67 (SEGDEEETTQ). 2 consecutive C2H2-type zinc fingers follow at residues 116-140 (ELCQ…VYQH) and 150-172 (YMCP…LLIH). Residues 257 to 366 (KWALRRQNEP…EKMDMMLRAQ (110 aa)) adopt a coiled-coil conformation. The disordered stretch occupies residues 278-319 (RTAKKSRRDNETPEEREVRRMRDREAKRLQRMQETDEQRARR).

It belongs to the krueppel C2H2-type zinc-finger protein family.

It is found in the nucleus. Its function is as follows. May be involved in transcriptional regulation. The sequence is that of Zinc finger protein 821 (ZNF821) from Homo sapiens (Human).